We begin with the raw amino-acid sequence, 672 residues long: Transcription factor tau 91 kDa subunit (672 aa).

A required for DNA-binding region spans residues 1 to 158 (MAVIPAKKRG…SLGQKGRPIR (158 aa)). The segment at residues 6-18 (AKKRGRPRKSVVA) is a DNA-binding region (a.T hook). 2 disordered regions span residues 24–45 (SLAS…ASKK) and 67–156 (VNNV…KGRP). A compositionally biased stretch (acidic residues) spans 71–100 (DDTDDDDFVLNDEGDGEESDNVEIEFENEL). Positions 159-672 (LLKDLSSARD…AGLLTLEYLS (514 aa)) are sufficient for interaction with TFC8. C375 and C383 form a disulfide bridge.

As to quaternary structure, heterodimer with TFC8. Component of the TFIIIC complex composed of TFC1, TFC3, TFC4, TFC6, TFC7 and TFC8. The subunits are organized in two globular domains, tauA and tauB, connected by a proteolysis-sensitive and flexible linker. Interacts with TFC1, TFC3, TFC4 and directly with TFC8.

It is found in the nucleus. Functionally, TFIIIC mediates tRNA and 5S RNA gene activation by binding to intragenic promoter elements. Upstream of the transcription start site, TFIIIC assembles the initiation complex TFIIIB-TFIIIC-tDNA, which is sufficient for RNA polymerase III recruitment and function. Part of the tauB domain of TFIIIC that binds boxB DNA promoter sites of tRNA and similar genes. Cooperates with TFC3 in DNA binding. The chain is Transcription factor tau 91 kDa subunit (TFC6) from Saccharomyces cerevisiae (strain ATCC 204508 / S288c) (Baker's yeast).